The sequence spans 529 residues: Tyrosinase (529 aa).

The signal sequence occupies residues Met1–Gly18. Residues His19–Ser476 lie on the Lumenal, melanosome side of the membrane. N-linked (GlcNAc...) asparagine glycosylation is found at Asn86, Asn111, and Asn161. Residues His180, His202, and His211 each coordinate Cu cation. N-linked (GlcNAc...) asparagine glycosylation is present at Asn230. Residues Ser287–Pro313 form a disordered region. Residue Asn337 is glycosylated (N-linked (GlcNAc...) asparagine). His363 and His367 together coordinate Cu cation. N-linked (GlcNAc...) asparagine glycosylation occurs at Asn371. Position 390 (His390) interacts with Cu cation. Residues Trp477–Ser497 traverse the membrane as a helical segment. The Cytoplasmic segment spans residues Leu498 to Leu529.

The protein belongs to the tyrosinase family. Forms an OPN3-dependent complex with DCT in response to blue light in melanocytes. It depends on Cu(2+) as a cofactor. Glycosylated.

It is found in the melanosome membrane. Its subcellular location is the melanosome. The catalysed reaction is 2 L-dopa + O2 = 2 L-dopaquinone + 2 H2O. The enzyme catalyses L-tyrosine + O2 = L-dopaquinone + H2O. It carries out the reaction 2 5,6-dihydroxyindole-2-carboxylate + O2 = 2 indole-5,6-quinone-2-carboxylate + 2 H2O. Its function is as follows. This is a copper-containing oxidase that functions in the formation of pigments such as melanins and other polyphenolic compounds. Catalyzes the initial and rate limiting step in the cascade of reactions leading to melanin production from tyrosine. In addition to hydroxylating tyrosine to DOPA (3,4-dihydroxyphenylalanine), also catalyzes the oxidation of DOPA to DOPA-quinone, and possibly the oxidation of DHI (5,6-dihydroxyindole) to indole-5,6 quinone. In Homo sapiens (Human), this protein is Tyrosinase.